The following is a 265-amino-acid chain: Protein B8 (265 aa).

This Homo sapiens (Human) protein is Protein B8 (B8).